The chain runs to 270 residues: Nuclease PA3 (270 aa).

A divalent metal cation contacts are provided by Trp-1, His-6, His-15, Asp-45, and His-60. 1-6 (WGALGH) contacts substrate. Substrate-binding positions include 45 to 51 (DEYRLTS), 60 to 63 (HFID), and 73 to 78 (NVDYER). 2 disulfide bridges follow: Cys-72–Cys-217 and Cys-80–Cys-85. Asn-92 contributes to the substrate binding site. The N-linked (GlcNAc...) asparagine glycan is linked to Asn-92. Residues His-116, Asp-120, and His-126 each contribute to the a divalent metal cation site. A substrate binding region spans residues 116-164 (HFIGDMTQPLHDEAYAVGGNKINVTFDGYHDNLHSDWDTYMPQKLIGGH). A glycan (N-linked (GlcNAc...) asparagine) is linked at Asn-138. A divalent metal cation-binding residues include His-149 and Asp-153. Residues Asn-184 and Asn-197 are each glycosylated (N-linked (GlcNAc...) asparagine).

The protein belongs to the nuclease type I family. Zn(2+) is required as a cofactor.

The protein localises to the secreted. It carries out the reaction a ribonucleoside 3'-phosphate + H2O = a ribonucleoside + phosphate. Functionally, hydrolyzes only single-stranded DNA and RNA without apparent specificity for bases. The polypeptide is Nuclease PA3 (Penicillium sp).